Reading from the N-terminus, the 362-residue chain is Chorismate synthase (362 aa).

Residue Arg-47 participates in NADP(+) binding. FMN is bound by residues 124–126 (RAS), Gly-286, 301–305 (KPTAT), and Arg-327.

The protein belongs to the chorismate synthase family. Homotetramer. It depends on FMNH2 as a cofactor.

It catalyses the reaction 5-O-(1-carboxyvinyl)-3-phosphoshikimate = chorismate + phosphate. It functions in the pathway metabolic intermediate biosynthesis; chorismate biosynthesis; chorismate from D-erythrose 4-phosphate and phosphoenolpyruvate: step 7/7. In terms of biological role, catalyzes the anti-1,4-elimination of the C-3 phosphate and the C-6 proR hydrogen from 5-enolpyruvylshikimate-3-phosphate (EPSP) to yield chorismate, which is the branch point compound that serves as the starting substrate for the three terminal pathways of aromatic amino acid biosynthesis. This reaction introduces a second double bond into the aromatic ring system. This Prochlorococcus marinus (strain MIT 9303) protein is Chorismate synthase.